The primary structure comprises 443 residues: Probable glycine dehydrogenase (decarboxylating) subunit 1 (443 aa).

Belongs to the GcvP family. N-terminal subunit subfamily. The glycine cleavage system is composed of four proteins: P, T, L and H. In this organism, the P 'protein' is a heterodimer of two subunits.

It catalyses the reaction N(6)-[(R)-lipoyl]-L-lysyl-[glycine-cleavage complex H protein] + glycine + H(+) = N(6)-[(R)-S(8)-aminomethyldihydrolipoyl]-L-lysyl-[glycine-cleavage complex H protein] + CO2. Its function is as follows. The glycine cleavage system catalyzes the degradation of glycine. The P protein binds the alpha-amino group of glycine through its pyridoxal phosphate cofactor; CO(2) is released and the remaining methylamine moiety is then transferred to the lipoamide cofactor of the H protein. The protein is Probable glycine dehydrogenase (decarboxylating) subunit 1 of Chloroherpeton thalassium (strain ATCC 35110 / GB-78).